Here is a 445-residue protein sequence, read N- to C-terminus: Probable D-serine dehydratase (445 aa).

N6-(pyridoxal phosphate)lysine is present on lysine 111.

It belongs to the serine/threonine dehydratase family. DsdA subfamily. It depends on pyridoxal 5'-phosphate as a cofactor.

The catalysed reaction is D-serine = pyruvate + NH4(+). The polypeptide is Probable D-serine dehydratase (Burkholderia pseudomallei (strain 1106a)).